Here is a 223-residue protein sequence, read N- to C-terminus: Protein BTG4 (223 aa).

It belongs to the BTG family. In terms of assembly, interacts with CNOT7. Interacts with EIF4E. Interacts with CNOT8. Expressed in oocytes after germinal vesicle breakdown. Expressed in testis and in olfactory epithelium.

Its function is as follows. Adapter protein that bridges CNOT7, a catalytic subunit of the CCR4-NOT complex, to EIF4E. Facilitates maternal mRNAs decay during the maturation of oocytes and in the fertilized egg, and is required for the maternal-zygotic transition (MZT), zygotic cleavage and initiation of embryonic development. The protein is Protein BTG4 (BTG4) of Homo sapiens (Human).